The sequence spans 1104 residues: Translation initiation factor IF-2 (1104 aa).

Disordered stretches follow at residues 51–444 (SLLG…LAAQ) and 461–497 (LARP…RRRA). Low complexity-rich tracts occupy residues 60–119 (AKPA…KPQA) and 127–164 (ATPK…AAKP). Residues 189 to 202 (APTPRPTPARPTPR) are compositionally biased toward pro residues. 4 stretches are compositionally biased toward low complexity: residues 203–215 (PAGA…PTPG), 227–246 (GAPS…KPGA), 311–336 (STTG…PAGM), and 366–396 (PTKA…SFRP). Residues 406–420 (GRPDWDDSARLDALR) show a composition bias toward basic and acidic residues. Over residues 481 to 495 (MRKRKKETARQRQRR) the composition is skewed to basic residues. In terms of domain architecture, tr-type G spans 596-768 (RRPPVVTVMG…LLLVTEVEDL (173 aa)). The segment at 605-612 (GHVDHGKT) is G1. Residue 605–612 (GHVDHGKT) participates in GTP binding. Residues 630 to 634 (GITQH) form a G2 region. The interval 655–658 (DTPG) is G3. GTP contacts are provided by residues 655-659 (DTPGH) and 709-712 (NKID). The G4 stretch occupies residues 709–712 (NKID). The tract at residues 745–747 (SAI) is G5.

This sequence belongs to the TRAFAC class translation factor GTPase superfamily. Classic translation factor GTPase family. IF-2 subfamily.

The protein localises to the cytoplasm. Its function is as follows. One of the essential components for the initiation of protein synthesis. Protects formylmethionyl-tRNA from spontaneous hydrolysis and promotes its binding to the 30S ribosomal subunits. Also involved in the hydrolysis of GTP during the formation of the 70S ribosomal complex. This Synechococcus sp. (strain CC9605) protein is Translation initiation factor IF-2.